Reading from the N-terminus, the 242-residue chain is Biosynthetic peptidoglycan transglycosylase (242 aa).

A helical membrane pass occupies residues 19-39 (ILAALAVFWGGGIALFSVVPV).

This sequence belongs to the glycosyltransferase 51 family.

It localises to the cell inner membrane. It carries out the reaction [GlcNAc-(1-&gt;4)-Mur2Ac(oyl-L-Ala-gamma-D-Glu-L-Lys-D-Ala-D-Ala)](n)-di-trans,octa-cis-undecaprenyl diphosphate + beta-D-GlcNAc-(1-&gt;4)-Mur2Ac(oyl-L-Ala-gamma-D-Glu-L-Lys-D-Ala-D-Ala)-di-trans,octa-cis-undecaprenyl diphosphate = [GlcNAc-(1-&gt;4)-Mur2Ac(oyl-L-Ala-gamma-D-Glu-L-Lys-D-Ala-D-Ala)](n+1)-di-trans,octa-cis-undecaprenyl diphosphate + di-trans,octa-cis-undecaprenyl diphosphate + H(+). It functions in the pathway cell wall biogenesis; peptidoglycan biosynthesis. In terms of biological role, peptidoglycan polymerase that catalyzes glycan chain elongation from lipid-linked precursors. This chain is Biosynthetic peptidoglycan transglycosylase, found in Salmonella choleraesuis (strain SC-B67).